The sequence spans 500 residues: NAD(P)H-quinone oxidoreductase chain 4, chloroplastic (500 aa).

A run of 14 helical transmembrane segments spans residues 4-24 (FPWL…IFFL), 35-55 (YTMG…CYHF), 87-107 (IGPI…AWPV), 113-130 (LFHF…GLFS), 134-154 (LLLF…LLSM), 167-187 (FILY…GMGL), 208-228 (GLEI…LPII), 242-262 (HYST…YGLI), 274-294 (SIFS…AALT), 305-325 (IAYS…SLTN), 330-350 (GAIL…FLGG), 386-406 (LALP…GIIT), 416-436 (IIIT…LLSM), and 463-483 (FVSI…DLVI).

This sequence belongs to the complex I subunit 4 family.

The protein resides in the plastid. It is found in the chloroplast thylakoid membrane. It carries out the reaction a plastoquinone + NADH + (n+1) H(+)(in) = a plastoquinol + NAD(+) + n H(+)(out). The enzyme catalyses a plastoquinone + NADPH + (n+1) H(+)(in) = a plastoquinol + NADP(+) + n H(+)(out). The sequence is that of NAD(P)H-quinone oxidoreductase chain 4, chloroplastic from Lemna minor (Common duckweed).